A 935-amino-acid polypeptide reads, in one-letter code: Inter-alpha-trypsin inhibitor heavy chain H2 (935 aa).

Residues 1–18 (MKGLTCFLLCFLLSEAQG) form the signal peptide. The propeptide occupies 19 to 53 (FEIPTNGLSEFAEYGDLAELALGKFHVVPGNRRSQ). The VIT domain occupies 45–174 (VVPGNRRSQE…KVQFELHYQE (130 aa)). A glycan (N-linked (GlcNAc...) asparagine) is linked at N107. E271 carries the 4-carboxyglutamate modification. A VWFA domain is found at 297-457 (PKNILFVIDV…YDFLKRLSND (161 aa)). N434 is a glycosylation site (N-linked (GlcNAc...) asparagine). A Phosphoserine modification is found at S455. D691 is modified (aspartate 1-(chondroitin 4-sulfate)-ester). Residues 692–935 (PHFIIYLPRS…PLLYSFLKRP (244 aa)) constitute a propeptide that is removed on maturation. Position 875 is a phosphoserine (S875).

Belongs to the ITIH family. In terms of assembly, I-alpha-I plasma protease inhibitors are assembled from one or two heavy chains (HC) and one light chain, bikunin. Inter-alpha-inhibitor (I-alpha-I) is composed of ITIH1/HC1, ITIH2/HC2 and bikunin. Post-translationally, heavy chains are linked to bikunin via chondroitin 4-sulfate esterified to the alpha-carboxyl of the C-terminal aspartate after propeptide cleavage. Phosphorylated by FAM20C in the extracellular medium.

Its subcellular location is the secreted. Functionally, may act as a carrier of hyaluronan in serum or as a binding protein between hyaluronan and other matrix protein, including those on cell surfaces in tissues to regulate the localization, synthesis and degradation of hyaluronan which are essential to cells undergoing biological processes. The protein is Inter-alpha-trypsin inhibitor heavy chain H2 (ITIH2) of Sus scrofa (Pig).